A 240-amino-acid chain; its full sequence is Ubiquitin domain-containing protein 2 (240 aa).

Residues methionine 1–glycine 48 are disordered. The span at serine 12–glycine 21 shows a compositional bias: polar residues. The segment covering leucine 32–serine 41 has biased composition (basic and acidic residues). A Ubiquitin-like domain is found at cysteine 152–threonine 227.

The protein resides in the cytoplasm. The polypeptide is Ubiquitin domain-containing protein 2 (ubtd2) (Danio rerio (Zebrafish)).